The following is a 531-amino-acid chain: Chaperonin GroEL, chloroplastic (531 aa).

ATP is bound by residues 30-33 (TLGP), 87-91 (DGTTT), Gly-415, 481-483 (NAA), and Asp-497.

The protein belongs to the chaperonin (HSP60) family. As to quaternary structure, forms a cylinder of 14 subunits composed of two heptameric rings stacked back-to-back. Interacts with the co-chaperonin GroES.

Its subcellular location is the plastid. It is found in the chloroplast. The catalysed reaction is ATP + H2O + a folded polypeptide = ADP + phosphate + an unfolded polypeptide.. In terms of biological role, together with its co-chaperonin GroES, plays an essential role in assisting protein folding. The GroEL-GroES system forms a nano-cage that allows encapsulation of the non-native substrate proteins and provides a physical environment optimized to promote and accelerate protein folding. The polypeptide is Chaperonin GroEL, chloroplastic (Emiliania huxleyi (Coccolithophore)).